The following is a 154-amino-acid chain: CASP-like protein 5C2 (154 aa).

Residues 1–17 lie on the Cytoplasmic side of the membrane; sequence MEHVPGSFGTSASFALR. The chain crosses the membrane as a helical span at residues 18-38; sequence FGQTIFSAASLIFMCFDFDFY. The Extracellular portion of the chain corresponds to 39–41; sequence DFT. A helical membrane pass occupies residues 42-62; that stretch reads TFCYLAMVMAIVTPWSILLAL. Topologically, residues 63–81 are cytoplasmic; that stretch reads TDTYSVLVKLLPQELRVLS. The helical transmembrane segment at 82 to 102 threads the bilayer; sequence IVFAGDFVLSFLSLGGACAVA. Residues 103-128 are Extracellular-facing; sequence SATELLASADGKICDGSLCIQYQVSA. A helical transmembrane segment spans residues 129–149; that stretch reads ALAFLCWFLLLASALFNFWSL. At 150–154 the chain is on the cytoplasmic side; the sequence is PSLYY.

This sequence belongs to the Casparian strip membrane proteins (CASP) family. In terms of assembly, homodimer and heterodimers.

Its subcellular location is the cell membrane. The sequence is that of CASP-like protein 5C2 from Arabidopsis thaliana (Mouse-ear cress).